Consider the following 64-residue polypeptide: Prokaryotic ubiquitin-like protein Pup (64 aa).

The disordered stretch occupies residues Met1–Asp37. Residues Ser21–Tyr58 are ARC ATPase binding. The stretch at Ala23–Glu52 forms a coiled coil. Gln64 bears the Deamidated glutamine mark. Residue Gln64 forms an Isoglutamyl lysine isopeptide (Gln-Lys) (interchain with K-? in acceptor proteins) linkage.

This sequence belongs to the prokaryotic ubiquitin-like protein family. Strongly interacts with the proteasome-associated ATPase ARC through a hydrophobic interface; the interacting region of Pup lies in its C-terminal half. There is one Pup binding site per ARC hexamer ring. In terms of processing, is modified by deamidation of its C-terminal glutamine to glutamate by the deamidase Dop, a prerequisite to the subsequent pupylation process.

It participates in protein degradation; proteasomal Pup-dependent pathway. In terms of biological role, protein modifier that is covalently attached to lysine residues of substrate proteins, thereby targeting them for proteasomal degradation. The tagging system is termed pupylation. This Mycolicibacterium vanbaalenii (strain DSM 7251 / JCM 13017 / BCRC 16820 / KCTC 9966 / NRRL B-24157 / PYR-1) (Mycobacterium vanbaalenii) protein is Prokaryotic ubiquitin-like protein Pup.